The chain runs to 370 residues: Nodulation protein Z (370 aa).

The region spanning 47–361 is the GT23 domain; that stretch reads SSNDRFVVSR…NDPGRLILIE (315 aa).

Belongs to the glycosyltransferase 23 family.

In terms of biological role, fucosyltransferase which adds the fucose moiety of the nod factor on its terminal reducing N-acetylglucosamine end. Uses GDP-fucose as the donor group. This is Nodulation protein Z (nodZ) from Bradyrhizobium diazoefficiens (strain JCM 10833 / BCRC 13528 / IAM 13628 / NBRC 14792 / USDA 110).